Consider the following 308-residue polypeptide: Coenzyme PQQ synthesis protein B (308 aa).

Belongs to the PqqB family.

It functions in the pathway cofactor biosynthesis; pyrroloquinoline quinone biosynthesis. In terms of biological role, may be involved in the transport of PQQ or its precursor to the periplasm. This is Coenzyme PQQ synthesis protein B from Klebsiella pneumoniae subsp. pneumoniae (strain ATCC 700721 / MGH 78578).